Reading from the N-terminus, the 299-residue chain is Tyrosine recombinase XerC (299 aa).

One can recognise a Core-binding (CB) domain in the interval 1 to 85 (MERQLDAYCE…AVRGLYHYLN (85 aa)). One can recognise a Tyr recombinase domain in the interval 106–285 (RLPKTLDTDR…DFQHLATVYD (180 aa)). Active-site residues include R146, K170, H237, R240, and H263. Y272 (O-(3'-phospho-DNA)-tyrosine intermediate) is an active-site residue.

This sequence belongs to the 'phage' integrase family. XerC subfamily. In terms of assembly, forms a cyclic heterotetrameric complex composed of two molecules of XerC and two molecules of XerD.

The protein localises to the cytoplasm. Site-specific tyrosine recombinase, which acts by catalyzing the cutting and rejoining of the recombining DNA molecules. The XerC-XerD complex is essential to convert dimers of the bacterial chromosome into monomers to permit their segregation at cell division. It also contributes to the segregational stability of plasmids. The chain is Tyrosine recombinase XerC from Pseudomonas fluorescens.